The primary structure comprises 467 residues: ESX-4 secretion system protein eccD4 (467 aa).

Transmembrane regions (helical) follow at residues 122–142 (GALA…RNAL), 152–172 (ATAG…VIAC), 186–206 (VIAT…VPGV), 209–229 (VLVA…ITGC), 241–261 (AVVV…VPAI), 264–284 (LATL…VLLA), 319–339 (LTSL…GTAV), 344–364 (IHRS…LLLL), 374–394 (SLVF…VAAD), 401–421 (PWIA…GFVA), and 439–459 (CLAL…YSAV).

The protein belongs to the EccD/Snm4 family. In terms of assembly, part of the ESX-4 / type VII secretion system (T7SS), which is composed of cytosolic and membrane components.

The protein resides in the cell membrane. This chain is ESX-4 secretion system protein eccD4 (eccD4), found in Mycobacterium tuberculosis (strain CDC 1551 / Oshkosh).